A 508-amino-acid polypeptide reads, in one-letter code: Anthranilate synthase component 1 (508 aa).

Residues S51 and 283–285 (PYM) contribute to the L-tryptophan site. Residue 323–324 (GT) participates in chorismate binding. E350 is a binding site for Mg(2+). Residues Y438, R458, 477–479 (GAG), and G479 each bind chorismate. E492 is a Mg(2+) binding site.

The protein belongs to the anthranilate synthase component I family. In terms of assembly, heterotetramer consisting of two non-identical subunits: a beta subunit (TrpG) and a large alpha subunit (TrpE). Mg(2+) is required as a cofactor.

The enzyme catalyses chorismate + L-glutamine = anthranilate + pyruvate + L-glutamate + H(+). It functions in the pathway amino-acid biosynthesis; L-tryptophan biosynthesis; L-tryptophan from chorismate: step 1/5. With respect to regulation, feedback inhibited by tryptophan. In terms of biological role, part of a heterotetrameric complex that catalyzes the two-step biosynthesis of anthranilate, an intermediate in the biosynthesis of L-tryptophan. In the first step, the glutamine-binding beta subunit (TrpG) of anthranilate synthase (AS) provides the glutamine amidotransferase activity which generates ammonia as a substrate that, along with chorismate, is used in the second step, catalyzed by the large alpha subunit of AS (TrpE) to produce anthranilate. In the absence of TrpG, TrpE can synthesize anthranilate directly from chorismate and high concentrations of ammonia. This is Anthranilate synthase component 1 (trpE) from Synechocystis sp. (strain ATCC 27184 / PCC 6803 / Kazusa).